The following is a 364-amino-acid chain: Peptide chain release factor 1 (364 aa).

Position 230 is an N5-methylglutamine (Gln-230).

This sequence belongs to the prokaryotic/mitochondrial release factor family. Post-translationally, methylated by PrmC. Methylation increases the termination efficiency of RF1.

The protein resides in the cytoplasm. In terms of biological role, peptide chain release factor 1 directs the termination of translation in response to the peptide chain termination codons UAG and UAA. This is Peptide chain release factor 1 from Acidothermus cellulolyticus (strain ATCC 43068 / DSM 8971 / 11B).